The following is a 73-amino-acid chain: Large ribosomal subunit protein uL29 (73 aa).

Belongs to the universal ribosomal protein uL29 family.

The protein is Large ribosomal subunit protein uL29 of Synechococcus sp. (strain JA-2-3B'a(2-13)) (Cyanobacteria bacterium Yellowstone B-Prime).